The sequence spans 167 residues: Ribosome maturation factor RimM (167 aa).

Residues 94–166 form the PRC barrel domain; that stretch reads DDRAWLHELE…YIHVPRFDEF (73 aa).

The protein belongs to the RimM family. In terms of assembly, binds ribosomal protein uS19.

Its subcellular location is the cytoplasm. Functionally, an accessory protein needed during the final step in the assembly of 30S ribosomal subunit, possibly for assembly of the head region. Essential for efficient processing of 16S rRNA. May be needed both before and after RbfA during the maturation of 16S rRNA. It has affinity for free ribosomal 30S subunits but not for 70S ribosomes. The sequence is that of Ribosome maturation factor RimM from Chlorobium luteolum (strain DSM 273 / BCRC 81028 / 2530) (Pelodictyon luteolum).